The sequence spans 1364 residues: Trifunctional purine biosynthetic protein adenosine-3 (1364 aa).

One can recognise an ATP-grasp domain in the interval 114–321 (KDFMLRHGIP…LFEVMQACCS (208 aa)). Residue 140–202 (IRSAPYQALV…EELLEGEEIS (63 aa)) coordinates ATP. 2 residues coordinate Mn(2+): Glu-291 and Asn-293. The tract at residues 435 to 1154 (AIATAPGLSY…ARTQRMLSQP (720 aa)) is AIRS. Residues 1155–1364 (RKRVAVLISG…EAPKDIKDSQ (210 aa)) form a GART region. 1166-1168 (GSN) lines the N(1)-(5-phospho-beta-D-ribosyl)glycinamide pocket. (6R)-10-formyltetrahydrofolate is bound by residues Arg-1221, 1246–1249 (MRIL), and Asn-1263. Residue His-1265 is the Proton donor of the active site. 1297–1301 (DEGVD) contacts (6R)-10-formyltetrahydrofolate. Residue 1327–1330 (HYAE) coordinates N(1)-(5-phospho-beta-D-ribosyl)glycinamide.

The protein in the N-terminal section; belongs to the GARS family. It in the central section; belongs to the AIR synthase family. In the C-terminal section; belongs to the GART family.

The catalysed reaction is 5-phospho-beta-D-ribosylamine + glycine + ATP = N(1)-(5-phospho-beta-D-ribosyl)glycinamide + ADP + phosphate + H(+). It catalyses the reaction 2-formamido-N(1)-(5-O-phospho-beta-D-ribosyl)acetamidine + ATP = 5-amino-1-(5-phospho-beta-D-ribosyl)imidazole + ADP + phosphate + H(+). It carries out the reaction N(1)-(5-phospho-beta-D-ribosyl)glycinamide + (6R)-10-formyltetrahydrofolate = N(2)-formyl-N(1)-(5-phospho-beta-D-ribosyl)glycinamide + (6S)-5,6,7,8-tetrahydrofolate + H(+). Its pathway is purine metabolism; IMP biosynthesis via de novo pathway; 5-amino-1-(5-phospho-D-ribosyl)imidazole from N(2)-formyl-N(1)-(5-phospho-D-ribosyl)glycinamide: step 2/2. It functions in the pathway purine metabolism; IMP biosynthesis via de novo pathway; N(1)-(5-phospho-D-ribosyl)glycinamide from 5-phospho-alpha-D-ribose 1-diphosphate: step 2/2. It participates in purine metabolism; IMP biosynthesis via de novo pathway; N(2)-formyl-N(1)-(5-phospho-D-ribosyl)glycinamide from N(1)-(5-phospho-D-ribosyl)glycinamide (10-formyl THF route): step 1/1. Trifunctional enzyme required for de novo purine biosynthesis. This is Trifunctional purine biosynthetic protein adenosine-3 (ade3) from Drosophila pseudoobscura pseudoobscura (Fruit fly).